The sequence spans 206 residues: FMN-dependent NADH:quinone oxidoreductase (206 aa).

Residues Ser-10 and Ser-15–Ser-17 contribute to the FMN site.

Belongs to the azoreductase type 1 family. In terms of assembly, homodimer. FMN is required as a cofactor.

It catalyses the reaction 2 a quinone + NADH + H(+) = 2 a 1,4-benzosemiquinone + NAD(+). It carries out the reaction N,N-dimethyl-1,4-phenylenediamine + anthranilate + 2 NAD(+) = 2-(4-dimethylaminophenyl)diazenylbenzoate + 2 NADH + 2 H(+). In terms of biological role, quinone reductase that provides resistance to thiol-specific stress caused by electrophilic quinones. Also exhibits azoreductase activity. Catalyzes the reductive cleavage of the azo bond in aromatic azo compounds to the corresponding amines. This is FMN-dependent NADH:quinone oxidoreductase from Acidobacterium capsulatum (strain ATCC 51196 / DSM 11244 / BCRC 80197 / JCM 7670 / NBRC 15755 / NCIMB 13165 / 161).